A 598-amino-acid polypeptide reads, in one-letter code: Cytochrome P450 monooxygenase phmB (598 aa).

Residues 107 to 127 (VAAKIAALLFVAGLFWAVSVL) form a helical membrane-spanning segment. Asparagine 171, asparagine 428, and asparagine 494 each carry an N-linked (GlcNAc...) asparagine glycan. Residue cysteine 542 coordinates heme. Residues asparagine 549 and asparagine 581 are each glycosylated (N-linked (GlcNAc...) asparagine).

Belongs to the cytochrome P450 family. The cofactor is heme.

Its subcellular location is the membrane. Its pathway is mycotoxin biosynthesis. Its function is as follows. Cytochrome P450 monooxygenase; part of the gene cluster that mediates the biosynthesis of the mycotoxins phomacins, leucine-derived cytochalasans with potent actin polymerization-inhibitory activities and monocot-specific antigerminative activities. The first step in the pathway is catalyzed by the hybrid PKS-NRPS phmA, assisted by the enoyl reductase phmE, that are responsible for fusion of the leucine precursor and the polyketide backbone to produce a 2-pyrrolidone intermediate. The polyketide synthase module (PKS) of phmA is responsible for the synthesis of the polyketide backbone and the downstream nonribosomal peptide synthetase (NRPS) amidates the carboxyl end of the polyketide with the leucine precursor. Because phmA lacks a designated enoylreductase (ER) domain, the required activity is provided the enoyl reductase phmE. Reduction by the hydrolyase phmG, followed by dehydration and intra-molecular Diels-Alder cyclization by the Diels-Alderase phmD then yield the required isoindolone-fused macrocycle. A number of oxidative steps catalyzed by the tailoring cytochrome P450 monooxygenase phmB, the FAD-linked oxidoreductase phmC and the short-chain dehydrogenase/reductase phmF, are further required to afford the final products, phomacin D and phomacin E. This Phaeosphaeria nodorum (strain SN15 / ATCC MYA-4574 / FGSC 10173) (Glume blotch fungus) protein is Cytochrome P450 monooxygenase phmB.